Reading from the N-terminus, the 751-residue chain is C2 domain-containing protein At1g53590 (751 aa).

Helical transmembrane passes span 2 to 22 and 26 to 46; these read ESSL…ISSL and HAFF…RYVM. An SMP-LTD domain is found at 68 to 262; that stretch reads DSESVRWMNY…QPNMLVVDME (195 aa). Residues 267-381 form the C2 domain; sequence PTSENWFFVD…RGGQRNDMWL (115 aa). Residues Asp-298, Asp-304, Asp-352, Asp-354, and Asp-359 each contribute to the Ca(2+) site. Disordered stretches follow at residues 469 to 519 and 572 to 751; these read QIWE…GRGL and SGPL…SSSK. A compositionally biased stretch (basic and acidic residues) spans 472 to 482; that stretch reads EPRKGKSRRLD. The span at 483 to 502 shows a compositional bias: polar residues; the sequence is SQIQRTPNDESLSNGSSSTD. The segment covering 590 to 611 has biased composition (basic and acidic residues); it reads NSGKGHMKDVAKSFLKQAEKSA. The span at 612–624 shows a compositional bias: basic residues; the sequence is KQIKHAFSRKGSM. A compositionally biased stretch (basic and acidic residues) spans 625–634; the sequence is KPRDGHKEIV. Acidic residues predominate over residues 639 to 651; that stretch reads SGTDSESSDDDDA. 2 stretches are compositionally biased toward basic and acidic residues: residues 664-681 and 703-751; these read KLTR…DHVD and VEAK…SSSK. Residues 701 to 728 are a coiled coil; the sequence is TDVEAKEEKLKEAAESETRDMDTAMNIK.

It belongs to the extended synaptotagmin family. The cofactor is Ca(2+).

It is found in the membrane. The sequence is that of C2 domain-containing protein At1g53590 (NTMC2T6.1) from Arabidopsis thaliana (Mouse-ear cress).